The sequence spans 470 residues: MAEKEAKHHVVLFPLPGQGHIGSMLKLAQLLSTAGFYITFVHTERNYRRFLLTSTSFNVPKFRFRTIPDGFPDNDPRSPLPFIELQESLDTKCKGYYREVLVAVDEEWPPVTCVVADTALPLALEVPEELGIPVMILAPHSAGSILTGYSIPQLIQGGEFPFPEDADMDELLQGVLGLEGIVRRRDMSVRGFKSIDSPFVRFEVKMNQNLSRGRALILNTTESMDSLALRHIRSICPTTYTLGPFHVLLRNIKDQSHSASLSEEDRSCIAWLDTKPNKSVVYVSFGSLAAMSREAFLEFQQGLLDSGYHFLWVIRPDMVEGGLEECELTASERRYFVKWAPQEEVLAHPAVGCFLTHSGWNSTLESIYAGVPMICWPFFADQLINSRFVSEVWKIALDMKDLCGRSYVERMVKEVMSGEKGKELRKSICEMADMVKKSAEEGGSSYTNFKELIGHIKSLSLPACSSTSGF.

Catalysis depends on His-20, which acts as the Proton acceptor. His-20 provides a ligand contact to an anthocyanidin. Catalysis depends on Asp-117, which acts as the Charge relay. UDP-alpha-D-glucose contacts are provided by Ala-340, Gln-342, His-357, Trp-360, Asn-361, Ser-362, and Glu-365. Residue Ala-380 coordinates an anthocyanidin. Residues Asp-381 and Gln-382 each coordinate UDP-alpha-D-glucose.

It belongs to the UDP-glycosyltransferase family. Expressed in young cromes.

It catalyses the reaction myricetin 3-O-alpha-L-rhamnoside + UDP-alpha-D-glucose = myricetin 3-O-[beta-D-glucosyl-(1-&gt;2)-alpha-L-rhamnoside] + UDP + H(+). The protein operates within flavonoid metabolism. Functionally, glucosyltransferase involved in montbretin A (MbA) biosynthesis. Catalyzes the glucosylation of myricetin 3-O-alpha-L-rhamnoside (MR) to produce myricetin 3-O-[beta-D-glucosyl-(1-&gt;2)-alpha-L-rhamnoside] (MRG), a precursor of MbA. MbA is a potent inhibitor of human pancreatic alpha-amylase and is being developed as drug candidate to treat type-2 diabetes. In vitro, is able to transfer UDP-xylose with 50-fold less efficiency compared with UDP-glucose. In vitro, can use myricetin 3-O-glucoside and quercetin 3-O-glucoside as substrates, although these two flavonoids may not be physiological substrates in vivo. This Crocosmia x crocosmiiflora (Montbretia) protein is Myricetin 3-O-rhamnoside 1,2-glucosyltransferase UGT709G2.